The primary structure comprises 605 residues: Beta-hexosaminidase ARB_07893 (605 aa).

The first 18 residues, 1–18, serve as a signal peptide directing secretion; it reads MLWIWVPGILGLFGRVEA. Residue Asn30 is glycosylated (N-linked (GlcNAc...) asparagine). The Nucleophile role is filled by Glu293. Residue Asn342 is glycosylated (N-linked (GlcNAc...) asparagine). Glu374 acts as the Proton donor in catalysis. The N-linked (GlcNAc...) asparagine glycan is linked to Asn449.

Belongs to the glycosyl hydrolase 20 family.

The protein localises to the secreted. The catalysed reaction is Hydrolysis of terminal non-reducing N-acetyl-D-hexosamine residues in N-acetyl-beta-D-hexosaminides.. Beta-hexosaminidase that shows a broad substrate specificity. In Arthroderma benhamiae (strain ATCC MYA-4681 / CBS 112371) (Trichophyton mentagrophytes), this protein is Beta-hexosaminidase ARB_07893.